A 455-amino-acid polypeptide reads, in one-letter code: Membrane protein Pbs54 (455 aa).

The helical transmembrane segment at 12-32 threads the bilayer; it reads IISIIILILRISLFSCAEHLF. Asn41, Asn102, and Asn125 each carry an N-linked (GlcNAc...) asparagine glycan. Helical transmembrane passes span 181-201, 220-240, 244-264, 285-305, 312-332, and 346-366; these read IFLI…LFNG, FIFF…LSCI, ILTF…FYLF, ILIG…IIFI, FLVK…IFFL, and FVFS…FWNI. Asn373 carries an N-linked (GlcNAc...) asparagine glycan. A helical transmembrane segment spans residues 398–418; it reads NMFALFMIFAMSILSIIFPRI.

The protein resides in the cell projection. It localises to the cilium. It is found in the flagellum. The protein localises to the cell membrane. Plays a role in gamete fertilization. Required for the successful transmission of parasites to mosquito. The polypeptide is Membrane protein Pbs54 (Plasmodium berghei (strain Anka)).